A 108-amino-acid chain; its full sequence is uncharacterized protein (108 aa).

Positions 1–23 (MVDELEKNQVQPQETEENKENAL) are disordered.

This is an uncharacterized protein from Ureaplasma parvum serovar 3 (strain ATCC 700970).